A 703-amino-acid polypeptide reads, in one-letter code: Methionine--tRNA ligase (703 aa).

A 'HIGH' region motif is present at residues 15–25; sequence PYANGPVHLGH. Zn(2+) contacts are provided by C147, C150, C160, and C163. A 'KMSKS' region motif is present at residues 345–349; that stretch reads KFSKS. Position 348 (K348) interacts with ATP. A tRNA-binding domain is found at 602–703; the sequence is DFQKIDLRVA…GEGINGNSVS (102 aa).

This sequence belongs to the class-I aminoacyl-tRNA synthetase family. MetG type 1 subfamily. As to quaternary structure, homodimer. Zn(2+) is required as a cofactor.

The protein resides in the cytoplasm. It catalyses the reaction tRNA(Met) + L-methionine + ATP = L-methionyl-tRNA(Met) + AMP + diphosphate. In terms of biological role, is required not only for elongation of protein synthesis but also for the initiation of all mRNA translation through initiator tRNA(fMet) aminoacylation. This is Methionine--tRNA ligase from Chlorobaculum tepidum (strain ATCC 49652 / DSM 12025 / NBRC 103806 / TLS) (Chlorobium tepidum).